Here is a 460-residue protein sequence, read N- to C-terminus: Bifunctional protein GlmU (460 aa).

Residues 1–232 (MALNVVILAA…AIEVEGANNR (232 aa)) form a pyrophosphorylase region. UDP-N-acetyl-alpha-D-glucosamine contacts are provided by residues 8-11 (LAAG), Lys-22, Gln-73, 78-79 (GT), 100-102 (YGD), Gly-137, Glu-157, Asn-172, and Asn-230. Residue Asp-102 coordinates Mg(2+). Asn-230 serves as a coordination point for Mg(2+). Positions 233–253 (VQLAQLERAYQAREAEKLMLA) are linker. An N-acetyltransferase region spans residues 254–460 (GANLRDPSRI…GWQRPVKIKK (207 aa)). Positions 336 and 354 each coordinate UDP-N-acetyl-alpha-D-glucosamine. The active-site Proton acceptor is the His-366. The UDP-N-acetyl-alpha-D-glucosamine site is built by Tyr-369 and Asn-380. Acetyl-CoA contacts are provided by residues Ala-383, 389–390 (NY), Ser-408, Ala-426, and Arg-443.

In the N-terminal section; belongs to the N-acetylglucosamine-1-phosphate uridyltransferase family. It in the C-terminal section; belongs to the transferase hexapeptide repeat family. As to quaternary structure, homotrimer. It depends on Mg(2+) as a cofactor.

It localises to the cytoplasm. It carries out the reaction alpha-D-glucosamine 1-phosphate + acetyl-CoA = N-acetyl-alpha-D-glucosamine 1-phosphate + CoA + H(+). The enzyme catalyses N-acetyl-alpha-D-glucosamine 1-phosphate + UTP + H(+) = UDP-N-acetyl-alpha-D-glucosamine + diphosphate. The protein operates within nucleotide-sugar biosynthesis; UDP-N-acetyl-alpha-D-glucosamine biosynthesis; N-acetyl-alpha-D-glucosamine 1-phosphate from alpha-D-glucosamine 6-phosphate (route II): step 2/2. It participates in nucleotide-sugar biosynthesis; UDP-N-acetyl-alpha-D-glucosamine biosynthesis; UDP-N-acetyl-alpha-D-glucosamine from N-acetyl-alpha-D-glucosamine 1-phosphate: step 1/1. Its pathway is bacterial outer membrane biogenesis; LPS lipid A biosynthesis. Its function is as follows. Catalyzes the last two sequential reactions in the de novo biosynthetic pathway for UDP-N-acetylglucosamine (UDP-GlcNAc). The C-terminal domain catalyzes the transfer of acetyl group from acetyl coenzyme A to glucosamine-1-phosphate (GlcN-1-P) to produce N-acetylglucosamine-1-phosphate (GlcNAc-1-P), which is converted into UDP-GlcNAc by the transfer of uridine 5-monophosphate (from uridine 5-triphosphate), a reaction catalyzed by the N-terminal domain. The polypeptide is Bifunctional protein GlmU (Shewanella baltica (strain OS185)).